The chain runs to 1132 residues: Ubiquitin carboxyl-terminal hydrolase 43 (1132 aa).

Residues 1–103 form a disordered region; it reads MDPGVGNALG…GARPPGAQGL (103 aa). Over residues 17–28 the composition is skewed to basic residues; sequence RPRRRRSLRRLL. Low complexity-rich tracts occupy residues 29–44 and 63–78; these read NRFL…SGDS and FACA…GSPG. The USP domain occupies 101 to 710; it reads QGLKNHGNTC…GAYILFYQKR (610 aa). The active-site Nucleophile is Cys-110. His-668 functions as the Proton acceptor in the catalytic mechanism. Arg-746 is subject to Asymmetric dimethylarginine. 4 disordered regions span residues 839–891, 935–1008, 1024–1044, and 1057–1106; these read RRRP…TGVP, TVMP…RGQG, RTVR…SDRL, and RESP…GEQI. The segment covering 941-950 has biased composition (basic and acidic residues); that stretch reads GDEKPARPEG. Over residues 958–967 the composition is skewed to low complexity; it reads GSSQVGSQSS. Ser-970 bears the Phosphoserine mark. Positions 994 to 1006 are enriched in basic and acidic residues; it reads AAMEERAPDKDRG.

It belongs to the peptidase C19 family.

It catalyses the reaction Thiol-dependent hydrolysis of ester, thioester, amide, peptide and isopeptide bonds formed by the C-terminal Gly of ubiquitin (a 76-residue protein attached to proteins as an intracellular targeting signal).. May recognize and hydrolyze the peptide bond at the C-terminal Gly of ubiquitin. Involved in the processing of poly-ubiquitin precursors as well as that of ubiquitinated proteins. The sequence is that of Ubiquitin carboxyl-terminal hydrolase 43 (Usp43) from Mus musculus (Mouse).